A 34-amino-acid chain; its full sequence is Potassium channel toxin alpha-KTx 6.17 (34 aa).

4 cysteine pairs are disulfide-bonded: C3-C24, C9-C29, C13-C31, and C19-C34.

This sequence belongs to the short scorpion toxin superfamily. Potassium channel inhibitor family. Alpha-KTx 06 subfamily. In terms of tissue distribution, expressed by the venom gland.

It is found in the secreted. This toxin reversibly blocks Shaker B potassium-channels (expressed in insect Sf9 cells) with a Kd of 96.6 nM, and presents an even better affinity toward hKv1.3 (KCNA3), blocking it with a Kd of 17.7 nM. In Opisthacanthus cayaporum (South American scorpion), this protein is Potassium channel toxin alpha-KTx 6.17.